The primary structure comprises 89 residues: Small ribosomal subunit protein uS15 (89 aa).

It belongs to the universal ribosomal protein uS15 family. Part of the 30S ribosomal subunit. Forms a bridge to the 50S subunit in the 70S ribosome, contacting the 23S rRNA.

In terms of biological role, one of the primary rRNA binding proteins, it binds directly to 16S rRNA where it helps nucleate assembly of the platform of the 30S subunit by binding and bridging several RNA helices of the 16S rRNA. Forms an intersubunit bridge (bridge B4) with the 23S rRNA of the 50S subunit in the ribosome. The chain is Small ribosomal subunit protein uS15 from Roseobacter denitrificans (strain ATCC 33942 / OCh 114) (Erythrobacter sp. (strain OCh 114)).